The sequence spans 311 residues: Ribose-5-phosphate isomerase (311 aa).

Positions 22–32 are enriched in gly residues; sequence AGGAASGGGGN. The tract at residues 22 to 67 is disordered; the sequence is AGGAASGGGGNSWDLPGSHVRLPGRAQSGTRGGAGNTSTSCGDSNS. An Omega-N-methylarginine modification is found at Arg52. The span at 57–67 shows a compositional bias: polar residues; that stretch reads NTSTSCGDSNS. Residue Ser106 is modified to Phosphoserine.

The protein belongs to the ribose 5-phosphate isomerase family.

The enzyme catalyses aldehydo-D-ribose 5-phosphate = D-ribulose 5-phosphate. It functions in the pathway carbohydrate degradation; pentose phosphate pathway; D-ribose 5-phosphate from D-ribulose 5-phosphate (non-oxidative stage): step 1/1. Functionally, catalyzes the reversible conversion of ribose-5-phosphate to ribulose 5-phosphate and participates in the first step of the non-oxidative branch of the pentose phosphate pathway. In Homo sapiens (Human), this protein is Ribose-5-phosphate isomerase.